A 112-amino-acid chain; its full sequence is Transmembrane protein 14C (112 aa).

Transmembrane regions (helical) follow at residues 7-27 (VVPL…GGII), 32-52 (AGSV…SLGA), 62-82 (VWVF…RFYH), and 86-106 (FMPA…VGVS).

It belongs to the TMEM14 family.

It localises to the mitochondrion membrane. In terms of biological role, required for normal heme biosynthesis. The sequence is that of Transmembrane protein 14C (TMEM14C) from Pongo abelii (Sumatran orangutan).